The primary structure comprises 428 residues: Enolase (428 aa).

Q173 serves as a coordination point for (2R)-2-phosphoglycerate. The active-site Proton donor is the E217. Residues D253, E294, and D320 each contribute to the Mg(2+) site. (2R)-2-phosphoglycerate is bound by residues K345, R374, S375, and K396. Residue K345 is the Proton acceptor of the active site.

The protein belongs to the enolase family. Mg(2+) is required as a cofactor.

The protein resides in the cytoplasm. It localises to the secreted. It is found in the cell surface. The catalysed reaction is (2R)-2-phosphoglycerate = phosphoenolpyruvate + H2O. The protein operates within carbohydrate degradation; glycolysis; pyruvate from D-glyceraldehyde 3-phosphate: step 4/5. Functionally, catalyzes the reversible conversion of 2-phosphoglycerate (2-PG) into phosphoenolpyruvate (PEP). It is essential for the degradation of carbohydrates via glycolysis. The chain is Enolase from Methanosarcina barkeri (strain Fusaro / DSM 804).